A 1479-amino-acid chain; its full sequence is Type VII secretion system protein EssC (1479 aa).

The interval 1–189 (MHKLIIKYNK…ASSLIRLTQE (189 aa)) is required for substrate secretion, protein missing this segment is unstable. The Cytoplasmic portion of the chain corresponds to 1-229 (MHKLIIKYNK…RPPQPIQKNN (229 aa)). The helical transmembrane segment at 230 to 252 (TVIWRSIIPPLVMIALTVVIFLV) threads the bilayer. The Extracellular segment spans residues 253–256 (RPIG). Residues 257 to 279 (IYILMMIGMSTVTIVFGITTYFS) form a helical membrane-spanning segment. The Cytoplasmic portion of the chain corresponds to 280 to 1479 (EKKKYNKDVE…QAYQKIRWFK (1200 aa)). 2 consecutive FtsK domains span residues 652–846 (DDIL…QDSN) and 997–1183 (QGPM…SEVS). ATP is bound by residues 672-679 (GTTGSGKS) and 1014-1021 (GSPGYGRT). Residues 1249-1479 (MMPDEIKYED…QAYQKIRWFK (231 aa)) are required for substrate secretion, truncated protein is stable.

Belongs to the EssC family. In terms of assembly, homooligomer. Interacts with EsaE.

The protein resides in the cell membrane. In terms of biological role, component of the type VII secretion system (Ess). Required for the secretion of substrates including EsxA and EsxB. However, unable to support secretion of the substrate protein EsxC. The polypeptide is Type VII secretion system protein EssC (Staphylococcus aureus (strain NCTC 8325 / PS 47)).